The chain runs to 575 residues: Reverse gyrse subunit B (575 aa).

The RG N-terminal-type; degenerate zinc finger occupies 1-39 (MKIYYNNVCPNCSGRISNERLIKGLPCENDYPYEEGTIE). Residues Gln-83 and 100–107 (APTGMGKT) each bind ATP. Positions 87-247 (FIRAYKGYSF…KLKISGKDLE (161 aa)) constitute a Helicase ATP-binding domain. Residues 204-207 (DDVD) carry the DEAD box motif. Residues 316 to 465 (QTLELIKKLG…ALKMVEEAIE (150 aa)) form the Helicase C-terminal domain.

Belongs to the DEAD box helicase family. DDVD subfamily. In terms of assembly, heterodimer of an RgyA and RgyB subunit.

It localises to the cytoplasm. The enzyme catalyses ATP + H2O = ADP + phosphate + H(+). Functionally, modifies the topological state of DNA by introducing positive supercoils in an ATP-dependent process. Binds to single-stranded DNA, transiently cleaves and then rejoins the end, introducing a positive supercoil in the process. The scissile phosphodiester is attacked by the catalytic tyrosine of the enzyme, resulting in the formation of a DNA-(5'-phosphotyrosyl)-enzyme intermediate. Probably involved in rewinding DNA strands in regions of the chromosome that have opened up to allow replication, transcription, DNA repair or for DNA protection. Reconstituted holoenzyme binds dsDNA a bit better than ssDNA, this subunit preferentially binds dsDNA. In isolation this subunit has DNA-stimulated ATPase activity that is stimulated by topoisomerase-domain containing RgyA. This subunit inhibits the relaxation activity of the topoisomerase subunit while promoting positive supercoiling. This chain is Reverse gyrse subunit B, found in Nanoarchaeum equitans (strain Kin4-M).